Reading from the N-terminus, the 968-residue chain is Polycystin-2 (968 aa).

The span at 1-11 shows a compositional bias: polar residues; the sequence is MVNSSRVQPQQ. Disordered stretches follow at residues 1–28 and 58–181; these read MVNSSRVQPQQPGDAKRPPAPRAPDPGR and RIRQ…LPLE. Residues 1–219 are Cytoplasmic-facing; that stretch reads MVNSSRVQPQ…STNREKYLKS (219 aa). Residues 62–83 show a composition bias toward low complexity; the sequence is AAARDPPAGAAASPSPPLSSCS. 2 positions are modified to phosphoserine: serine 76 and serine 80. The segment covering 95 to 107 has biased composition (acidic residues); it reads EAEEEEEEVEGEE. Residues 123-139 are compositionally biased toward low complexity; sequence RRSAASSAVSSVGARSR. Omega-N-methylarginine is present on arginine 137. Residues 220-241 traverse the membrane as a helical segment; sequence VLRELVTYLLFLIVLCILTYGM. Residues 242-468 are Extracellular-facing; sequence MSSNVYYYTR…PLKLIRYVTT (227 aa). N-linked (GlcNAc...) asparagine glycans are attached at residues asparagine 299 and asparagine 305. The N-linked (GlcNAc...) (complex) asparagine glycan is linked to asparagine 328. A disulfide bridge connects residues cysteine 331 and cysteine 344. N-linked (GlcNAc...) asparagine glycans are attached at residues asparagine 362 and asparagine 375. A helical transmembrane segment spans residues 469–489; the sequence is FDFFLAACEIIFCFFIFYYVV. The Cytoplasmic segment spans residues 490 to 505; it reads EEILEIRIHKLHYFRS. Residues 506–526 form a helical membrane-spanning segment; it reads FWNCLDVVIVVLSVVAIGINI. Topologically, residues 527 to 552 are extracellular; the sequence is YRTSNVEVLLQFLEDQNTFPNFEHLA. The chain crosses the membrane as a helical span at residues 553–573; the sequence is YWQIQFNNIAAVTVFFVWIKL. Glutamine 557 lines the cholesterol pocket. Over 574–597 the chain is Cytoplasmic; sequence FKFINFNRTMSQLSTTMSRCAKDL. A helical membrane pass occupies residues 598–619; sequence FGFAIMFFIIFLAYAQLAYLVF. Residues 620 to 631 lie on the Extracellular side of the membrane; that stretch reads GTQVDDFSTFQE. Residues 632 to 646 constitute an intramembrane region (pore-forming); it reads CIFTQFRIILGDINF. Leucine 641 provides a ligand contact to Ca(2+). The short motif at 641-643 is the Selectivity filter element; the sequence is LGD. The Extracellular portion of the chain corresponds to 647 to 654; sequence AEIEEANR. A helical transmembrane segment spans residues 655–675; that stretch reads VLGPIYFTTFVFFMFFILLNM. Residues 676 to 968 lie on the Cytoplasmic side of the membrane; sequence FLAIINDTYS…GGNGSSNVHV (293 aa). Residues 750 to 785 enclose the EF-hand domain; that stretch reads HTDAEIEAIFTKYDQDGDQELTEHEHQQMRDDLEKE. The Ca(2+) site is built by aspartate 763, aspartate 765, aspartate 767, glutamate 769, and glutamate 774. Positions 764 to 831 are disordered; sequence QDGDQELTEH…HSSRRRGSIS (68 aa). Residues 770-795 are compositionally biased toward basic and acidic residues; it reads LTEHEHQQMRDDLEKEREDLDLDHSS. Over residues 796–807 the composition is skewed to low complexity; that stretch reads LPRPMSSRSFPR. Phosphoserine occurs at positions 801, 808, 812, and 829. The linker stretch occupies residues 803 to 822; it reads RSFPRSLDDSEEDDDEDSGH. The tract at residues 810–821 is important for interaction with PACS1 and PACS2; the sequence is DDSEEDDDEDSG. Residues 833-872 adopt a coiled-coil conformation; that stretch reads GVSYEEFQVLVRRVDRMEHSIGSIVSKIDAVIVKLEIMER. Residues 917–968 are disordered; it reads ESDDAASQISHGLGTPVGLNGQPRPRSSRPSSSQSTEGMEGAGGNGSSNVHV. Residues 938–951 show a composition bias toward low complexity; it reads QPRPRSSRPSSSQS.

Belongs to the polycystin family. Homotetramer. Component of the heterotetrameric polycystin channel complex with PKD1; the tetramer contains one PKD1 chain and three PKD2 chains. Isoform 1 interacts with PKD1 while isoform 3 does not. Interacts with PKD1L1; probably forms a Ca(2+) channel. Interacts with CD2AP. Interacts with HAX1. Interacts with NEK8. Part of a complex containing AKAP5, ADCY5, ADCY6 and PDE4C. Interacts (via C-terminus) with TRPV4 (via C-terminus). Interacts (via C-terminal acidic region) with PACS1 and PACS2; these interactions retain the protein in the endoplasmic reticulum and prevent trafficking to the cell membrane. Interacts with TMEM33. Form a heterotetramer with TRPC1 with a 2:2 stoichiometry; has distinct channel properties separate from PKD2 or TRPC1 homomers alone. Interacts with TMEM120A; TMEM120A inhibits PKD2 channel activity through the physical association of PKD2 with TMEM120A. Interacts (via N-terminus) with RYR2; regulates RYR2 channel activity. In terms of processing, phosphorylated. Phosphorylation is important for protein function; a mutant that lacks the N-terminal phosphorylation sites cannot complement a zebrafish pkd2-deficient mutant. PKD-mediated phosphorylation at the C-terminus regulates its function in the release of Ca(2+) stores from the endoplasmic reticulum. Phosphorylation at Ser-812 regulates PKD2 trafficking. Phosphorylation at Ser-76 is required for PKD2 trafficking to or retention at the lateral plasma membrane. Phosphorylation at Ser-801, Ser-812 and Ser-829 regulates PKD2 channel activity. N-glycosylated. The four subunits in a tetramer probably differ in the extent of glycosylation; simultaneous glycosylation of all experimentally validated sites would probably create steric hindrance. Thus, glycosylation at Asn-305 is not compatible with glycosylation at Asn-328; only one of these two residues is glycosylated at a given time. Post-translationally, sumoylated by SUMO1; sumoylation regulates PKD2 membrane recycling and is necessary for intravascular pressure-induced arterial contractility. In terms of tissue distribution, detected in fetal and adult kidney. Detected at the thick ascending limb of the loop of Henle, at distal tubules, including the distal convoluted tubule and cortical collecting tubules, with weak staining of the collecting duct. Detected on placenta syncytiotrophoblasts (at protein level). Strongly expressed in ovary, fetal and adult kidney, testis, and small intestine. Not detected in peripheral leukocytes.

It localises to the cell projection. The protein localises to the cilium membrane. It is found in the endoplasmic reticulum membrane. The protein resides in the cell membrane. Its subcellular location is the basolateral cell membrane. It localises to the cytoplasmic vesicle membrane. The protein localises to the golgi apparatus. It is found in the vesicle. The protein resides in the secreted. Its subcellular location is the extracellular exosome. The enzyme catalyses K(+)(in) = K(+)(out). It carries out the reaction Na(+)(in) = Na(+)(out). It catalyses the reaction Ca(2+)(in) = Ca(2+)(out). With respect to regulation, channel activity is regulated by phosphorylation. Channel activity is regulated by intracellular Ca(2+). At the endoplasmic reticulum membrane (ER), TMEM33 enhances its channel activity. TMEM120A inhibits the channel activity of PKD2, and mediates mechanosensitivity of the PKD2-TMEM120A channel complex. PKD1/PKD2 complex on the plasma membrane is activated by PKD1 N-terminus. Functionally, forms a nonselective cation channel. Can function as a homotetrameric ion channel or can form heteromer with PKD1. Displays distinct function depending on its subcellular localization and regulation by its binding partners. In primary cilium functions as a cation channel, with a preference for monovalent cations over divalent cations that allows K(+), Na(+) and Ca(2+) influx, with low selectivity for Ca(2+). Involved in fluid-flow mechanosensation by the primary cilium in renal epithelium. In the endoplasmic reticulum, likely functions as a K(+) channel to facilitate Ca(2+) release. The heterotetrameric PKD1/PKD2 channel has higher Ca(2+) permeability than homomeric PKD2 channel and acts as a primarily Ca(2+)-permeable channel. Interacts with and acts as a regulator of a number of other channels, such as TRPV4, TRPC1, IP3R, RYR2, ultimately further affecting intracellular signaling, to modulate intracellular Ca(2+) signaling. Together with TRPV4, forms mechano- and thermosensitive channels in cilium. In cardiomyocytes, PKD2 modulates Ca(2+) release from stimulated RYR2 receptors through direct association. Also involved in left-right axis specification via its role in sensing nodal flow; forms a complex with PKD1L1 in cilia to facilitate flow detection in left-right patterning. Acts as a regulator of cilium length together with PKD1. Mediates systemic blood pressure and contributes to the myogenic response in cerebral arteries though vasoconstriction. The polypeptide is Polycystin-2 (Homo sapiens (Human)).